We begin with the raw amino-acid sequence, 1207 residues long: ATP-dependent helicase/nuclease subunit A (1207 aa).

Residues 2–472 form the UvrD-like helicase ATP-binding domain; it reads PQFTKEQQQA…ILLSDNFRST (471 aa). 23–30 contributes to the ATP binding site; the sequence is ASAGSGKT. In terms of domain architecture, UvrD-like helicase C-terminal spans 492–783; sequence GGIDYSKEGQ…RLMTIHGSKG (292 aa).

The protein belongs to the helicase family. AddA subfamily. As to quaternary structure, heterodimer of AddA and AddB/RexB. The cofactor is Mg(2+).

It catalyses the reaction Couples ATP hydrolysis with the unwinding of duplex DNA by translocating in the 3'-5' direction.. The catalysed reaction is ATP + H2O = ADP + phosphate + H(+). Its function is as follows. The heterodimer acts as both an ATP-dependent DNA helicase and an ATP-dependent, dual-direction single-stranded exonuclease. Recognizes the chi site generating a DNA molecule suitable for the initiation of homologous recombination. The AddA nuclease domain is required for chi fragment generation; this subunit has the helicase and 3' -&gt; 5' nuclease activities. This is ATP-dependent helicase/nuclease subunit A from Lactobacillus acidophilus (strain ATCC 700396 / NCK56 / N2 / NCFM).